The primary structure comprises 597 residues: ATP-dependent RNA helicase DBP9 (597 aa).

Positions 17–45 (ISFESLQLDTRLLQAIKRNGFKNPTLIQS) match the Q motif motif. Residues 49-235 (PLALQEKRDI…KEFCRAPAIL (187 aa)) form the Helicase ATP-binding domain. 62–69 (AATGCGKT) contributes to the ATP binding site. Residues 181–184 (DEVD) carry the DEAD box motif. Positions 248 to 477 (KLIQYYVKTS…PYSFDTKQIE (230 aa)) constitute a Helicase C-terminal domain. Residues 340 to 354 (EEDEENDDEIETNSE) show a composition bias toward acidic residues. 3 disordered regions span residues 340–373 (EEDE…GKKA), 521–540 (PQEL…RVQQ), and 561–597 (VGFV…KNFK). Basic and acidic residues-rich tracts occupy residues 355 to 367 (EQDK…DTKD) and 526 to 535 (SLRHDKELHP). Over residues 568-587 (SVKKSNRHKKNNKVFKKRSG) the composition is skewed to basic residues.

The protein belongs to the DEAD box helicase family. DDX56/DBP9 subfamily.

It localises to the nucleus. The protein resides in the nucleolus. The enzyme catalyses ATP + H2O = ADP + phosphate + H(+). Functionally, ATP-binding RNA helicase involved in the biogenesis of 60S ribosomal subunits and is required for the normal formation of 25S and 5.8S rRNAs. This is ATP-dependent RNA helicase DBP9 (DBP9) from Vanderwaltozyma polyspora (strain ATCC 22028 / DSM 70294 / BCRC 21397 / CBS 2163 / NBRC 10782 / NRRL Y-8283 / UCD 57-17) (Kluyveromyces polysporus).